We begin with the raw amino-acid sequence, 351 residues long: Putative glycosyltransferase 45 (351 aa).

This sequence belongs to the glycosyltransferase group 1 family.

The polypeptide is Putative glycosyltransferase 45 (SIFV0045) (Sulfolobus islandicus filamentous virus (isolate Iceland/Hveragerdi) (SIFV)).